The sequence spans 695 residues: Follicle-stimulating hormone receptor (695 aa).

Positions 1-17 (MSLLLVSLLAFLTLGSG) are cleaved as a signal peptide. 2 cysteine pairs are disulfide-bonded: cysteine 18/cysteine 25 and cysteine 23/cysteine 32. An LRRNT domain is found at 18-46 (CHHRICHCSNGVFLCQESKVTEIPPDLPR). The Extracellular segment spans residues 18–366 (CHHRICHCSN…EDIMGHDILR (349 aa)). 9 LRR repeats span residues 49 to 72 (VELR…FGDL), 73 to 97 (EKIE…LPKL), 98 to 118 (HEIR…AFQN), 119 to 143 (LPNL…KIQS), 144 to 169 (LQKV…VGLS), 170 to 192 (FESM…AFNG), 193 to 216 (TQLD…VFQG), 217 to 240 (ASGP…GLEN), and 241 to 259 (LKKL…PSLE). N-linked (GlcNAc...) asparagine glycans are attached at residues asparagine 191 and asparagine 199. 4 disulfides stabilise this stretch: cysteine 275/cysteine 346, cysteine 276/cysteine 292, cysteine 276/cysteine 356, and cysteine 292/cysteine 338. Asparagine 293 carries an N-linked (GlcNAc...) asparagine glycan. Tyrosine 335 is modified (sulfotyrosine). A helical transmembrane segment spans residues 367–387 (VLIWFISILAITGNIIVLVIL). The Cytoplasmic segment spans residues 388 to 398 (ITSQYKLTVPR). Residues 399–421 (FLMCNLAFADLCIGIYLLLIASV) traverse the membrane as a helical segment. Residues 422–443 (DIHTKTQYHNYAIDWQTGAGCD) lie on the Extracellular side of the membrane. The cysteines at positions 442 and 517 are disulfide-linked. A helical membrane pass occupies residues 444-465 (AAGFFTVFASELSVYTLTAITL). Topologically, residues 466–485 (ERWHTITHAMQLQCKVQLRH) are cytoplasmic. The helical transmembrane segment at 486 to 508 (AASIMLVGWIFAFTVALFPIFGI) threads the bilayer. Residues 509–528 (SSYMKVSICLPMDIDSPLSQ) lie on the Extracellular side of the membrane. Residues 529–550 (LYVVSLLVLNVLAFVVICGCYT) traverse the membrane as a helical segment. Residues 551–573 (HIYLTVRNPNIMSSSSDTKIAKR) are Cytoplasmic-facing. The helical transmembrane segment at 574–597 (MAMLIFTDFLCMAPISFFAISASL) threads the bilayer. Topologically, residues 598–608 (KVPLITVSKSK) are extracellular. Residues 609–630 (ILLVLFYPINSCANPFLYAIFT) form a helical membrane-spanning segment. The Cytoplasmic segment spans residues 631 to 695 (KNFRRDVFIL…LIPLSRLAQN (65 aa)).

Belongs to the G-protein coupled receptor 1 family. FSH/LSH/TSH subfamily. In terms of assembly, homotrimer. Functions as a homotrimer binding the FSH hormone heterodimer composed of CGA and FSHB. Interacts with ARRB2. Interacts with APPL2; interaction is independent of follicle stimulating hormone stimulation. Post-translationally, N-glycosylated; indirectly required for FSH-binding, possibly via a conformational change that allows high affinity binding of hormone. Sulfated.

The protein resides in the cell membrane. Its function is as follows. G protein-coupled receptor for follitropin, the follicle-stimulating hormone. Through cAMP production activates the downstream PI3K-AKT and ERK1/ERK2 signaling pathways. This Sus scrofa (Pig) protein is Follicle-stimulating hormone receptor (FSHR).